The sequence spans 92 residues: Signal peptidase complex subunit 1 (92 aa).

Over 1-12 (MDWQGQKLVEQL) the chain is Cytoplasmic. Residues 13-30 (MQILLVISGVVAVVVGYT) form a helical membrane-spanning segment. Over 31-36 (TESFRT) the chain is Lumenal. Residues 37–59 (MMLIYAGGVVLTTLVTVPNWPFY) traverse the membrane as a helical segment. The Cytoplasmic segment spans residues 60-92 (NLHPLKWLDPSEAEKHPKPEVVSVASKKKFSKK). Residues 73–92 (EKHPKPEVVSVASKKKFSKK) are disordered.

Belongs to the SPCS1 family. In terms of assembly, component of the signal peptidase complex (SPC) composed of a catalytic subunit SEC11 and three accessory subunits SPCS1, SPCS2 and SPCS3. The complex induces a local thinning of the ER membrane which is used to measure the length of the signal peptide (SP) h-region of protein substrates. This ensures the selectivity of the complex towards h-regions shorter than 18-20 amino acids.

The protein localises to the endoplasmic reticulum membrane. Component of the signal peptidase complex (SPC) which catalyzes the cleavage of N-terminal signal sequences from nascent proteins as they are translocated into the lumen of the endoplasmic reticulum. Dispensable for SPC enzymatic activity. This Arabidopsis thaliana (Mouse-ear cress) protein is Signal peptidase complex subunit 1.